An 856-amino-acid polypeptide reads, in one-letter code: Cyclic di-GMP phosphodiesterase PdeB (856 aa).

Transmembrane regions (helical) follow at residues 7-27 and 230-250; these read ILVF…YCLG and WVSL…YVWL. Residues 303–350 enclose the PAS domain; the sequence is QKERGKITLESIAEAVILTDIEAKVIYMNPKAETLLEVASSNAVGESL. The region spanning 454–587 is the GGDEF domain; the sequence is RSLAVCYLDL…GTNQIHIYDD (134 aa). The 255-residue stretch at 598–852 folds into the EAL domain; it reads APKWAVRIAQ…SYCEQFETRL (255 aa).

The protein localises to the cell membrane. It carries out the reaction 3',3'-c-di-GMP + H2O = 5'-phosphoguanylyl(3'-&gt;5')guanosine + H(+). Its function is as follows. Affects motility and biofilm formation, and is linked to the regulation of sulfate uptake and assimilation. The protein is Cyclic di-GMP phosphodiesterase PdeB (pdeB) of Shewanella oneidensis (strain ATCC 700550 / JCM 31522 / CIP 106686 / LMG 19005 / NCIMB 14063 / MR-1).